The chain runs to 145 residues: Immunoglobulin iota chain (145 aa).

A signal peptide spans 1-19 (MSWAPVLLMLFVYCTGCGP). Positions 20 to 41 (QPVLHQPPAMSSALGTTIRLTC) are framework-1. One can recognise an Ig-like V-type domain in the interval 20–132 (QPVLHQPPAM…EKEEREREWE (113 aa)). Cys-41 and Cys-115 are oxidised to a cystine. Positions 42–56 (TLRNDHDIGVYSVYW) are complementarity-determining-1. The segment at 57 to 70 (YQQRPGHPPRFLLR) is framework-2. The segment at 71–81 (YFSQSDKSQGP) is complementarity-determining-2. Positions 82 to 115 (QVPPRFSGSKDVARNRGYLSISELQPEDEAMYYC) are framework-3. Basic and acidic residues predominate over residues 121–130 (SSEKEERERE). Residues 121-145 (SSEKEEREREWEEEMEPTAARTRVP) are disordered.

It belongs to the immunoglobulin superfamily. Interacts with IGLL1. Interacts with SYNV1/HRD1 (via N-terminus); this interaction leads to increased VPREB1 ubiquitination and degradation in pre-B cells, possibly through a lysosomal, not proteasomal, pathway. In terms of tissue distribution, only expressed by pre-B-cells.

The protein resides in the endoplasmic reticulum. Functionally, associates with the Ig-mu chain to form a molecular complex that is expressed on the surface of pre-B-cells. This complex presumably regulates Ig gene rearrangements in the early steps of B-cell differentiation. In Homo sapiens (Human), this protein is Immunoglobulin iota chain (VPREB1).